A 943-amino-acid polypeptide reads, in one-letter code: Aconitate hydratase A (943 aa).

[4Fe-4S] cluster contacts are provided by Cys479, Cys545, and Cys548.

This sequence belongs to the aconitase/IPM isomerase family. As to quaternary structure, monomer. [4Fe-4S] cluster is required as a cofactor.

The catalysed reaction is citrate = D-threo-isocitrate. It carries out the reaction (2S,3R)-3-hydroxybutane-1,2,3-tricarboxylate = 2-methyl-cis-aconitate + H2O. The protein operates within carbohydrate metabolism; tricarboxylic acid cycle; isocitrate from oxaloacetate: step 2/2. It functions in the pathway organic acid metabolism; propanoate degradation. In terms of biological role, involved in the catabolism of short chain fatty acids (SCFA) via the tricarboxylic acid (TCA)(acetyl degradation route) and probably via the 2-methylcitrate cycle I (propionate degradation route). Catalyzes the reversible isomerization of citrate to isocitrate via cis-aconitate. The apo form of AcnA functions as a RNA-binding regulatory protein which binds to selected IRE-like sequences present within the UTRs (untranslated regions) of 3' trxC and 5' IdeR mRNA. Could catalyze the hydration of 2-methyl-cis-aconitate to yield (2R,3S)-2-methylisocitrate. This Mycobacterium tuberculosis (strain ATCC 25618 / H37Rv) protein is Aconitate hydratase A (acn).